The primary structure comprises 467 residues: tRNA-2-methylthio-N(6)-dimethylallyladenosine synthase (467 aa).

Residues 22 to 138 (GSYWITTFGC…LETLLNKVET (117 aa)) form the MTTase N-terminal domain. [4Fe-4S] cluster contacts are provided by Cys-31, Cys-67, Cys-101, Cys-173, Cys-177, and Cys-180. In terms of domain architecture, Radical SAM core spans 159 to 396 (RDSSICAWVN…NSLVEIKAKE (238 aa)). A TRAM domain is found at 399-467 (VRYKDRVEEV…AFSLSGVIEN (69 aa)).

The protein belongs to the methylthiotransferase family. MiaB subfamily. As to quaternary structure, monomer. The cofactor is [4Fe-4S] cluster.

The protein resides in the cytoplasm. It catalyses the reaction N(6)-dimethylallyladenosine(37) in tRNA + (sulfur carrier)-SH + AH2 + 2 S-adenosyl-L-methionine = 2-methylsulfanyl-N(6)-dimethylallyladenosine(37) in tRNA + (sulfur carrier)-H + 5'-deoxyadenosine + L-methionine + A + S-adenosyl-L-homocysteine + 2 H(+). Catalyzes the methylthiolation of N6-(dimethylallyl)adenosine (i(6)A), leading to the formation of 2-methylthio-N6-(dimethylallyl)adenosine (ms(2)i(6)A) at position 37 in tRNAs that read codons beginning with uridine. This chain is tRNA-2-methylthio-N(6)-dimethylallyladenosine synthase, found in Prochlorococcus marinus (strain MIT 9211).